A 755-amino-acid chain; its full sequence is Tryptophan 2-monooxygenase (755 aa).

Residues Ser-247, Glu-267, Lys-275, and Arg-295 each coordinate FMN. Arg-295 is a substrate binding site.

The protein belongs to the tryptophan 2-monooxygenase family. FMN serves as cofactor.

The enzyme catalyses L-tryptophan + O2 = indole-3-acetamide + CO2 + H2O. It participates in plant hormone metabolism; auxin biosynthesis. The polypeptide is Tryptophan 2-monooxygenase (tms1) (Rhizobium radiobacter (Agrobacterium tumefaciens)).